The following is a 378-amino-acid chain: Circumsporozoite protein (378 aa).

The N-terminal stretch at 1–22 is a signal peptide; it reads MKNFNLLAVSSILLVDLFPTHC. Residues 50–291 are disordered; sequence AQVRQSASRG…GQGQNNEGAN (242 aa). 2 stretches are compositionally biased toward basic and acidic residues: residues 66–92 and 101–126; these read PKNEEGADKQKKDEKKVEPKKPRENKL and ARAEDGARAEDGARAEDGARAEDGAR. Residues 80–88 form a required for the binding to heparan sulfate proteoglycans (HSPGs) on the surface of host hepatocytes region; it reads KKVEPKKPR. The segment at 91-95 is region I; contains the proteolytic cleavage site; the sequence is KLKQP. 24 repeat units span residues 99-104, 105-110, 111-116, 117-122, 123-128, 129-134, 135-140, 141-146, 147-152, 153-158, 159-164, 165-170, 171-176, 177-182, 183-188, 189-194, 195-200, 201-206, 212-222, 223-233, 234-244, 245-255, 256-266, and 267-277. Positions 99–206 are 18 X 6 AA tandem repeats of D-G-A-R-A-[EA]; it reads DGARAEDGAR…ARAADGARAE (108 aa). The segment covering 127–140 has biased composition (low complexity); that stretch reads AADGARAADGARAA. Residues 141-162 show a composition bias toward basic and acidic residues; it reads DGARAEDGARAEDGARAEDGAR. Residues 163–200 are compositionally biased toward low complexity; sequence AADGARAADGARAADGARAADGARAADGARAADGARAA. Residues 212-277 are 6 X 11 AA tandem repeats of G-N-[QR]-[AE]-G-G-Q-A-G-A-G; it reads GNREGGQAGA…NRAGGQAGAG (66 aa). A compositionally biased stretch (gly residues) spans 214 to 283; it reads REGGQAGAGG…AGAGDAGAGQ (70 aa). Residues 304–356 form the TSP type-1 domain; that stretch reads KIRSTIGVEWSPCTVTCGKGVRMRRKVSAANKKPEELDVNDLETEVCTMDKCA. 2 cysteine pairs are disulfide-bonded: cysteine 316-cysteine 350 and cysteine 320-cysteine 355. An O-linked (Fuc) threonine glycan is attached at threonine 319. A lipid anchor (GPI-anchor amidated cysteine) is attached at cysteine 355. A propeptide spans 356-378 (removed in mature form); that stretch reads AGIFNVVSNSLGLVILLVLALFN.

The protein belongs to the plasmodium circumsporozoite protein family. Post-translationally, during host cell invasion, proteolytically cleaved at the cell membrane in the region I by a papain-like cysteine protease of parasite origin. Cleavage is triggered by the sporozoite contact with highly sulfated heparan sulfate proteoglycans (HSPGs) present on the host hepatocyte cell surface. Cleavage exposes the TSP type-1 (TSR) domain and is required for productive invasion of host hepatocytes but not for adhesion to the host cell membrane. Cleavage is dispensable for sporozoite development in the oocyst, motility and for traversal of host and vector cells. In terms of processing, O-glycosylated; maybe by POFUT2.

Its subcellular location is the cell membrane. It localises to the cytoplasm. Essential sporozoite protein. In the mosquito vector, required for sporozoite development in the oocyst, migration through the vector hemolymph and entry into the vector salivary glands. In the vertebrate host, required for sporozoite migration through the host dermis and infection of host hepatocytes. Binds to highly sulfated heparan sulfate proteoglycans (HSPGs) on the surface of host hepatocytes. Functionally, in the vertebrate host, binds to highly sulfated heparan sulfate proteoglycans (HSPGs) on the surface of host hepatocytes and is required for sporozoite invasion of the host hepatocytes. This is Circumsporozoite protein from Plasmodium cynomolgi (strain London).